The primary structure comprises 367 residues: Putative threonine-phosphate decarboxylase (367 aa).

Residues 12 to 13 (HG), asparagine 29, and asparagine 152 contribute to the O-phospho-L-threonine site. An N6-(pyridoxal phosphate)lysine modification is found at lysine 213. Residues arginine 320 and arginine 334 each coordinate O-phospho-L-threonine.

It belongs to the class-II pyridoxal-phosphate-dependent aminotransferase family. Pyridoxal 5'-phosphate is required as a cofactor.

It catalyses the reaction O-phospho-L-threonine + H(+) = (R)-1-aminopropan-2-yl phosphate + CO2. It participates in cofactor biosynthesis; adenosylcobalamin biosynthesis. Functionally, decarboxylates L-threonine-O-3-phosphate to yield (R)-1-amino-2-propanol O-2-phosphate, the precursor for the linkage between the nucleotide loop and the corrin ring in cobalamin. This is Putative threonine-phosphate decarboxylase (cobD) from Caldanaerobacter subterraneus subsp. tengcongensis (strain DSM 15242 / JCM 11007 / NBRC 100824 / MB4) (Thermoanaerobacter tengcongensis).